The sequence spans 358 residues: Alanine racemase (358 aa).

The Proton acceptor; specific for D-alanine role is filled by Lys35. N6-(pyridoxal phosphate)lysine is present on Lys35. Arg131 is a binding site for substrate. The active-site Proton acceptor; specific for L-alanine is Tyr253. Residue Met301 participates in substrate binding.

Belongs to the alanine racemase family. Requires pyridoxal 5'-phosphate as cofactor.

It carries out the reaction L-alanine = D-alanine. It participates in amino-acid biosynthesis; D-alanine biosynthesis; D-alanine from L-alanine: step 1/1. Functionally, catalyzes the interconversion of L-alanine and D-alanine. May also act on other amino acids. The chain is Alanine racemase (alr) from Alteromonas mediterranea (strain DSM 17117 / CIP 110805 / LMG 28347 / Deep ecotype).